The chain runs to 570 residues: Transmembrane 7 superfamily member 3 (570 aa).

The first 21 residues, 1–21 (MGFLQLLVVAVLASEHRVAGA), serve as a signal peptide directing secretion. N-linked (GlcNAc...) asparagine glycans are attached at residues asparagine 27, asparagine 61, asparagine 75, asparagine 87, and asparagine 264. The next 7 membrane-spanning stretches (helical) occupy residues 296–313 (VFFT…FFGH), 320–342 (LFFI…LTPI), 347–369 (NLIL…WWRF), 371–393 (ILSI…VTFF), 408–430 (FWVT…LRIL), 437–459 (VIGS…SYIT), and 479–501 (PFQT…GITL).

As to expression, widely expressed. Highly expressed in kidney and pancreas.

It is found in the cell membrane. In terms of biological role, involved in the inhibition of cytokine-induced death of pancreatic beta cells. Involved in the promotion of insulin secretion from pancreatic beta cells. Is a downstream transcriptional target of p53/TP53, and acts as a pro-survival homeostatic factor that attenuates the development of cellular stress. Maintains protein homeostasis and promotes cell survival through attenuation of endoplasmic reticulum (ER) stress and the subsequent induction of unfolded protein response (UPR). The polypeptide is Transmembrane 7 superfamily member 3 (TM7SF3) (Homo sapiens (Human)).